Here is a 312-residue protein sequence, read N- to C-terminus: Homoserine O-succinyltransferase (312 aa).

The Acyl-thioester intermediate role is filled by cysteine 142. Substrate is bound by residues lysine 163 and serine 192. Histidine 235 functions as the Proton acceptor in the catalytic mechanism. The active site involves glutamate 237. Arginine 249 provides a ligand contact to substrate.

It belongs to the MetA family.

It is found in the cytoplasm. The catalysed reaction is L-homoserine + succinyl-CoA = O-succinyl-L-homoserine + CoA. Its pathway is amino-acid biosynthesis; L-methionine biosynthesis via de novo pathway; O-succinyl-L-homoserine from L-homoserine: step 1/1. Its function is as follows. Transfers a succinyl group from succinyl-CoA to L-homoserine, forming succinyl-L-homoserine. This chain is Homoserine O-succinyltransferase, found in Aliivibrio salmonicida (strain LFI1238) (Vibrio salmonicida (strain LFI1238)).